The following is a 180-amino-acid chain: Ribulose bisphosphate carboxylase small subunit, chloroplastic 2 (180 aa).

The N-terminal 56 residues, Met1–Gln56, are a transit peptide targeting the chloroplast.

Belongs to the RuBisCO small chain family. As to quaternary structure, heterohexadecamer of 8 large and 8 small subunits.

It localises to the plastid. It is found in the chloroplast. RuBisCO catalyzes two reactions: the carboxylation of D-ribulose 1,5-bisphosphate, the primary event in carbon dioxide fixation, as well as the oxidative fragmentation of the pentose substrate. Both reactions occur simultaneously and in competition at the same active site. Although the small subunit is not catalytic it is essential for maximal activity. The chain is Ribulose bisphosphate carboxylase small subunit, chloroplastic 2 from Spinacia oleracea (Spinach).